The sequence spans 100 residues: Protein RnfH (100 aa).

This sequence belongs to the UPF0125 (RnfH) family.

The chain is Protein RnfH from Pseudomonas paraeruginosa (strain DSM 24068 / PA7) (Pseudomonas aeruginosa (strain PA7)).